The chain runs to 940 residues: Phosphoenolpyruvate carboxylase (940 aa).

Active-site residues include H138 and K603.

The protein belongs to the PEPCase type 1 family. Mg(2+) is required as a cofactor.

The catalysed reaction is oxaloacetate + phosphate = phosphoenolpyruvate + hydrogencarbonate. Functionally, forms oxaloacetate, a four-carbon dicarboxylic acid source for the tricarboxylic acid cycle. The polypeptide is Phosphoenolpyruvate carboxylase (Streptococcus thermophilus (strain ATCC BAA-491 / LMD-9)).